The primary structure comprises 250 residues: 2,5-dichloro-2,5-cyclohexadiene-1,4-diol dehydrogenase (250 aa).

9 to 34 (IIVTGGGSGIGRATVELLVASGANVA) serves as a coordination point for NAD(+). Ser-141 is a substrate binding site. Tyr-154 (proton acceptor) is an active-site residue.

This sequence belongs to the short-chain dehydrogenases/reductases (SDR) family.

It catalyses the reaction 2,5-dichlorocyclohexa-2,5-dien-1,4-diol + NAD(+) = 2,5-dichlorohydroquinone + NADH + H(+). It functions in the pathway xenobiotic degradation; gamma-hexachlorocyclohexane degradation. Its function is as follows. Catalyzes the dehydrogenation of 2,5-dichloro-2,5-cyclohexadiene-1,4-diol (2,5-DDOL) to 2,5-dichlorohydroquinone (2,5-DCHQ), a step in the degradation of gamma-hexachlorocyclohexane (gamma-HCH or lindane). Has an essential role in this assimilation pathway that allows S.japonicum UT26 to grow on gamma-HCH as the sole source of carbon and energy. This chain is 2,5-dichloro-2,5-cyclohexadiene-1,4-diol dehydrogenase, found in Sphingobium indicum (strain DSM 16413 / CCM 7287 / MTCC 6362 / UT26 / NBRC 101211 / UT26S) (Sphingobium japonicum).